The primary structure comprises 451 residues: uncharacterized protein (451 aa).

In terms of domain architecture, TRAM spans 2–60; sequence NLKVKQKIPLKIKRMGINGEGIGFYQKTLVFVPGALKGEDIYCQITSIRRNFVEAKLLK. The [4Fe-4S] cluster site is built by Cys73, Cys79, Cys82, and Cys162. Residues Gln283, Tyr312, Asp333, and Asp381 each contribute to the S-adenosyl-L-methionine site. Cys408 serves as the catalytic Nucleophile.

Belongs to the class I-like SAM-binding methyltransferase superfamily. RNA M5U methyltransferase family.

This is an uncharacterized protein from Streptococcus pneumoniae serotype 4 (strain ATCC BAA-334 / TIGR4).